We begin with the raw amino-acid sequence, 226 residues long: UPF0758 protein PputW619_0186 (226 aa).

Positions 102-224 (ALESPSAVRR…PLSMVEQGWI (123 aa)) constitute an MPN domain. The Zn(2+) site is built by His173, His175, and Asp186. The JAMM motif signature appears at 173-186 (HNHPSGNSEPSQDD).

This sequence belongs to the UPF0758 family.

The polypeptide is UPF0758 protein PputW619_0186 (Pseudomonas putida (strain W619)).